The following is a 190-amino-acid chain: Protein GrpE (190 aa).

Residues aspartate 21–leucine 49 form a disordered region. Positions leucine 23–glutamate 42 are enriched in acidic residues.

This sequence belongs to the GrpE family. As to quaternary structure, homodimer.

It is found in the cytoplasm. Functionally, participates actively in the response to hyperosmotic and heat shock by preventing the aggregation of stress-denatured proteins, in association with DnaK and GrpE. It is the nucleotide exchange factor for DnaK and may function as a thermosensor. Unfolded proteins bind initially to DnaJ; upon interaction with the DnaJ-bound protein, DnaK hydrolyzes its bound ATP, resulting in the formation of a stable complex. GrpE releases ADP from DnaK; ATP binding to DnaK triggers the release of the substrate protein, thus completing the reaction cycle. Several rounds of ATP-dependent interactions between DnaJ, DnaK and GrpE are required for fully efficient folding. The chain is Protein GrpE from Streptococcus pyogenes serotype M3 (strain SSI-1).